A 1507-amino-acid polypeptide reads, in one-letter code: DNA-directed RNA polymerase subunit beta' (1507 aa).

Residues C71, C73, C86, and C89 each coordinate Zn(2+). Mg(2+) contacts are provided by D470, D472, and D474. Zn(2+)-binding residues include C800, C874, C881, and C884.

Belongs to the RNA polymerase beta' chain family. As to quaternary structure, the RNAP catalytic core consists of 2 alpha, 1 beta, 1 beta' and 1 omega subunit. When a sigma factor is associated with the core the holoenzyme is formed, which can initiate transcription. The cofactor is Mg(2+). Zn(2+) serves as cofactor.

The enzyme catalyses RNA(n) + a ribonucleoside 5'-triphosphate = RNA(n+1) + diphosphate. DNA-dependent RNA polymerase catalyzes the transcription of DNA into RNA using the four ribonucleoside triphosphates as substrates. This chain is DNA-directed RNA polymerase subunit beta', found in Nitratiruptor sp. (strain SB155-2).